The following is a 604-amino-acid chain: 3-hydroxy-3-methylglutaryl-coenzyme A reductase (604 aa).

A disordered region spans residues 1–31 (MDVRRRSEKPAYPTKEFAAGEKPLKPHKQQQ). The next 2 helical transmembrane spans lie at 40–62 (ASDALPLPLYLTNGLFFTMFFSV) and 90–110 (AIASLIASVIYLLGFFGIGFV). The interval 111–189 (QSFVSRDNND…PLVTPAASEE (79 aa)) is linker. Residues 190 to 604 (DEEIIKSVVQ…STKDVTKASS (415 aa)) form a catalytic region. The active-site Charge relay system is Glu283. Asn347 carries an N-linked (GlcNAc...) asparagine glycan. Lys415 (charge relay system) is an active-site residue. N-linked (GlcNAc...) asparagine glycosylation is present at Asn460. The Charge relay system role is filled by Asp491. His589 acts as the Proton donor in catalysis. Asn593 is a glycosylation site (N-linked (GlcNAc...) asparagine).

This sequence belongs to the HMG-CoA reductase family. In terms of tissue distribution, found in protoplasts and leaves submitted to stress. Low levels found in apexes, anthers and roots.

The protein localises to the endoplasmic reticulum membrane. It carries out the reaction (R)-mevalonate + 2 NADP(+) + CoA = (3S)-3-hydroxy-3-methylglutaryl-CoA + 2 NADPH + 2 H(+). It participates in metabolic intermediate biosynthesis; (R)-mevalonate biosynthesis; (R)-mevalonate from acetyl-CoA: step 3/3. Catalyzes the synthesis of mevalonate, the specific precursor of all isoprenoid compounds present in plants. Possible role in plant defense mechanisms as well as in the cell cycle. This Nicotiana sylvestris (Wood tobacco) protein is 3-hydroxy-3-methylglutaryl-coenzyme A reductase (HMGR).